Consider the following 403-residue polypeptide: Beta-galactoside alpha-2,6-sialyltransferase 1 (403 aa).

Over 1–9 (MIHTNLKRK) the chain is Cytoplasmic. Residues 10–26 (FSCFVLVFLLFAIICVW) form a helical; Signal-anchor for type II membrane protein membrane-spanning segment. The Lumenal segment spans residues 27 to 403 (KKGSDYEALT…TLSGFRNNRC (377 aa)). 3 disulfide bridges follow: cysteine 139–cysteine 403, cysteine 181–cysteine 332, and cysteine 350–cysteine 361. Asparagine 146 and asparagine 158 each carry an N-linked (GlcNAc...) asparagine glycan. Substrate contacts are provided by residues serine 186, asparagine 209, asparagine 230, 319–321 (SSG), cysteine 350, tyrosine 351, threonine 362, tyrosine 366, histidine 367, and lysine 373. At tyrosine 366 the chain carries Phosphotyrosine.

The protein belongs to the glycosyltransferase 29 family. As to quaternary structure, monomer and homodimer. N-glycosylated.

The protein resides in the golgi apparatus. It localises to the golgi stack membrane. It is found in the secreted. The enzyme catalyses a beta-D-galactoside + CMP-N-acetyl-beta-neuraminate = an N-acetyl-alpha-neuraminyl-(2-&gt;6)-beta-D-galactosyl derivative + CMP + H(+). The protein operates within protein modification; protein glycosylation. In terms of biological role, transfers sialic acid from CMP-sialic acid to galactose-containing acceptor substrates. In Mus musculus (Mouse), this protein is Beta-galactoside alpha-2,6-sialyltransferase 1 (St6gal1).